The chain runs to 60 residues: UPF0434 protein NMA0874 (60 aa).

This sequence belongs to the UPF0434 family.

The protein is UPF0434 protein NMA0874 of Neisseria meningitidis serogroup A / serotype 4A (strain DSM 15465 / Z2491).